The sequence spans 1092 residues: Probable arabinosyltransferase A (1092 aa).

Transmembrane regions (helical) follow at residues 21 to 43, 214 to 233, 249 to 271, 324 to 346, 353 to 372, 382 to 399, 404 to 426, 517 to 534, 541 to 563, 568 to 590, 602 to 624, 639 to 661, and 682 to 704; these read IARL…VPLL, AVMV…LALL, GLWT…IVGA, VWMR…RCVL, VAAN…AAWL, PLIA…ENSI, LWPA…QGLI, FAVL…MVLL, GAVS…LLIL, WAIQ…AFAF, ALYV…GWFY, IAHY…LAGW, and ALAS…GSMV. Positions 772 to 798 are disordered; the sequence is PSGVSEHLEPEPVGTNPGTPNSEGPVD.

Belongs to the emb family.

The protein localises to the cell membrane. Its function is as follows. Arabinosyl transferase responsible for the polymerization of arabinose into the arabinan of arabinogalactan. This Mycolicibacterium smegmatis (Mycobacterium smegmatis) protein is Probable arabinosyltransferase A (embA).